A 210-amino-acid polypeptide reads, in one-letter code: Ribosomal RNA large subunit methyltransferase E (210 aa).

Residues glycine 60, tryptophan 62, aspartate 85, aspartate 101, and aspartate 126 each contribute to the S-adenosyl-L-methionine site. The active-site Proton acceptor is lysine 166. Over residues 191 to 200 the composition is skewed to basic and acidic residues; sequence KPKASRDKSS. Positions 191-210 are disordered; sequence KPKASRDKSSETFLVARDLK.

It belongs to the class I-like SAM-binding methyltransferase superfamily. RNA methyltransferase RlmE family.

It is found in the cytoplasm. The catalysed reaction is uridine(2552) in 23S rRNA + S-adenosyl-L-methionine = 2'-O-methyluridine(2552) in 23S rRNA + S-adenosyl-L-homocysteine + H(+). In terms of biological role, specifically methylates the uridine in position 2552 of 23S rRNA at the 2'-O position of the ribose in the fully assembled 50S ribosomal subunit. This is Ribosomal RNA large subunit methyltransferase E from Bordetella bronchiseptica (strain ATCC BAA-588 / NCTC 13252 / RB50) (Alcaligenes bronchisepticus).